The following is a 235-amino-acid chain: Intron-encoded endonuclease I-SceI (235 aa).

Belongs to the LAGLIDADG endonuclease family. In terms of assembly, monomer. The cofactor is Mg(2+).

It localises to the mitochondrion. Functionally, mitochondrial DNA endonuclease involved in intron homing. It introduces a specific double-strand break in the DNA of the 21S rRNA gene and thus mediates the insertion of an intron, containing its own coding sequence (group I intron), into an intronless gene. Specifically recognizes and cleaves the sequence 5'-TAGGGATAACAGGGTAAT-3'. The polypeptide is Intron-encoded endonuclease I-SceI (SCEI) (Saccharomyces cerevisiae (strain ATCC 204508 / S288c) (Baker's yeast)).